The chain runs to 331 residues: Protein C10 (331 aa).

The protein belongs to the poxviridae C4/C10 protein family.

This chain is Protein C10, found in Vaccinia virus (strain Western Reserve) (VACV).